The sequence spans 613 residues: Chitin synthase 8 (613 aa).

Residues 1–73 are disordered; that stretch reads MAVSPTAKRK…PAPLTRPPPP (73 aa). Residue Asn-17 is glycosylated (N-linked (GlcNAc...) asparagine). The span at 18–27 shows a compositional bias: polar residues; sequence LSRQSSSART. Residues 61–73 show a composition bias toward pro residues; sequence ESPPAPLTRPPPP. Transmembrane regions (helical) follow at residues 119-139 and 142-162; these read YSLI…LWNY and YWYI…IFAI. Residues Asn-312, Asn-421, and Asn-471 are each glycosylated (N-linked (GlcNAc...) asparagine). Transmembrane regions (helical) follow at residues 556–576 and 583–602; these read VTTW…AIAL and IFEN…RYAA.

It belongs to the chitin synthase family.

The protein resides in the cell membrane. The catalysed reaction is [(1-&gt;4)-N-acetyl-beta-D-glucosaminyl](n) + UDP-N-acetyl-alpha-D-glucosamine = [(1-&gt;4)-N-acetyl-beta-D-glucosaminyl](n+1) + UDP + H(+). Polymerizes chitin, a structural polymer of the cell wall and septum, by transferring the sugar moiety of UDP-GlcNAc to the non-reducing end of the growing chitin polymer. Plays a role in cell wall integrity. Plays a key role in pathogenicity. Likely contributes to post-penetration virulence. In Verticillium dahliae (strain VdLs.17 / ATCC MYA-4575 / FGSC 10137) (Verticillium wilt), this protein is Chitin synthase 8.